A 419-amino-acid chain; its full sequence is Circumsporozoite protein (419 aa).

The signal sequence occupies residues 1–23 (MKNFNLLAVSSILLVDLFRTHWG). A disordered region spans residues 50–111 (AQVRQSASRG…GNAGGNAGGN (62 aa)). The segment covering 65–95 (NPKEEDGADKKKKKDEKQVEPKKPRENKLKQ) has biased composition (basic and acidic residues). Residues 81 to 89 (KQVEPKKPR) are required for the binding to heparan sulfate proteoglycans (HSPGs) on the surface of host hepatocytes. A region I; contains the proteolytic cleavage site region spans residues 92–96 (KLKQP). Repeat copies occupy residues 99–102 (NADG), 103–106 (NAGG), 107–110 (NAGG), 111–114 (NAGG), 115–118 (NAGG), 119–122 (NAGG), 123–126 (NADG), 127–130 (NAGG), 131–134 (NAGG), 135–138 (NAGG), 139–142 (NAGG), 143–146 (NAGG), 147–150 (NADG), 151–154 (NAGG), 155–158 (NADG), 159–162 (NAGG), 163–166 (NADG), 167–170 (NAGG), 171–174 (NAGG), 175–178 (NAGG), 179–182 (NADG), 183–186 (NAGG), 187–190 (NAGG), 191–194 (NAGG), 195–198 (NAGG), 199–202 (NAGG), 203–206 (NAGG), 207–210 (NAGG), 211–214 (NADG), 215–218 (NAGG), 219–222 (NAGG), 223–226 (NAGG), 227–230 (NADG), 231–234 (NAGG), 235–238 (NAGG), 239–242 (NAGG), 243–246 (NAGG), and 247–250 (NAGG). Positions 99 to 314 (NADGNAGGNA…GGNAGANAGN (216 aa)) are 54 X 4 AA approximate tandem repeats of N-A-G-G. The disordered stretch occupies residues 146–237 (GNADGNAGGN…ADGNAGGNAG (92 aa)). One copy of the 39; approximate repeat lies at 251–254 (TAGG). A run of 13 repeats spans residues 255–258 (NADG), 259–262 (NAGG), 263–266 (NAGG), 267–270 (NAGG), 271–274 (NAGG), 275–278 (NAGG), 279–282 (NAGG), 283–286 (NAGG), 287–290 (NAGG), 291–294 (NAGG), 295–298 (NAGG), 299–302 (NAGG), and 303–306 (NAGG). One copy of the 53; approximate repeat lies at 307-310 (NAGA). The 54; approximate repeat unit spans residues 311–314 (NAGN). Residues 312–332 (AGNKKAGDAGAGQGQNNEAAN) are disordered. A TSP type-1 domain is found at 345–397 (KIRSTISTEWSPCSVTCGKGVRMRKKVSAANKKPEELDVNDLETEVCTMDKCA). 2 cysteine pairs are disulfide-bonded: Cys-357–Cys-391 and Cys-361–Cys-396. An O-linked (Fuc) threonine glycan is attached at Thr-360. Cys-396 carries the GPI-anchor amidated cysteine lipid modification. The propeptide at 397–419 (AGIFNVVSNSLRLVILLVLALFN) is removed in mature form.

This sequence belongs to the plasmodium circumsporozoite protein family. Post-translationally, during host cell invasion, proteolytically cleaved at the cell membrane in the region I by a papain-like cysteine protease of parasite origin. Cleavage is triggered by the sporozoite contact with highly sulfated heparan sulfate proteoglycans (HSPGs) present on the host hepatocyte cell surface. Cleavage exposes the TSP type-1 (TSR) domain and is required for productive invasion of host hepatocytes but not for adhesion to the host cell membrane. Cleavage is dispensable for sporozoite development in the oocyst, motility and for traversal of host and vector cells. In terms of processing, O-glycosylated; maybe by POFUT2.

Its subcellular location is the cell membrane. The protein localises to the cytoplasm. Essential sporozoite protein. In the mosquito vector, required for sporozoite development in the oocyst, migration through the vector hemolymph and entry into the vector salivary glands. In the vertebrate host, required for sporozoite migration through the host dermis and infection of host hepatocytes. Binds to highly sulfated heparan sulfate proteoglycans (HSPGs) on the surface of host hepatocytes. In terms of biological role, in the vertebrate host, binds to highly sulfated heparan sulfate proteoglycans (HSPGs) on the surface of host hepatocytes and is required for sporozoite invasion of the host hepatocytes. This chain is Circumsporozoite protein, found in Plasmodium cynomolgi (strain Mulligan/NIH).